A 669-amino-acid chain; its full sequence is Methionine--tRNA ligase (669 aa).

The 'HIGH' region motif lies at proline 15–histidine 25. Residues cysteine 146, cysteine 149, cysteine 158, and cysteine 162 each contribute to the Zn(2+) site. Positions lysine 328–serine 332 match the 'KMSKS' region motif. Residue lysine 331 coordinates ATP. A tRNA-binding domain is found at glutamine 570 to arginine 669.

This sequence belongs to the class-I aminoacyl-tRNA synthetase family. MetG type 1 subfamily. In terms of assembly, homodimer. Zn(2+) serves as cofactor.

The protein resides in the cytoplasm. The catalysed reaction is tRNA(Met) + L-methionine + ATP = L-methionyl-tRNA(Met) + AMP + diphosphate. In terms of biological role, is required not only for elongation of protein synthesis but also for the initiation of all mRNA translation through initiator tRNA(fMet) aminoacylation. The polypeptide is Methionine--tRNA ligase (Methanothrix thermoacetophila (strain DSM 6194 / JCM 14653 / NBRC 101360 / PT) (Methanosaeta thermophila)).